Reading from the N-terminus, the 64-residue chain is Antimicrobial peptide THP2 (64 aa).

The N-terminal stretch at 1 to 28 is a signal peptide; that stretch reads MRILYLLFSLLFLALQVSPGLSSPKRDM. Cystine bridges form between Cys-31–Cys-57, Cys-36–Cys-51, and Cys-41–Cys-58.

In terms of tissue distribution, expressed in circulating heterophil granulocytes and bone marrow (at protein level).

Its subcellular location is the secreted. Antibacterial activity against the Gram-positive bacterium Staphylococcus aureus. Lacks antibacterial activity against the Gram-negative bacterium E.coli K-12. The polypeptide is Antimicrobial peptide THP2 (Meleagris gallopavo (Wild turkey)).